The chain runs to 303 residues: Oxygen-dependent coproporphyrinogen-III oxidase (303 aa).

Residue Ser93 coordinates substrate. His97 and His107 together coordinate a divalent metal cation. The active-site Proton donor is His107. A substrate-binding site is contributed by 109 to 111 (NVR). Positions 149 and 179 each coordinate a divalent metal cation. The interval 244 to 279 (YVEFNLVFDRGTLFGLQSGGRTESILLSMPPLAQWR) is important for dimerization. A substrate-binding site is contributed by 262–264 (GGR).

This sequence belongs to the aerobic coproporphyrinogen-III oxidase family. In terms of assembly, homodimer. Requires a divalent metal cation as cofactor.

The protein localises to the cytoplasm. The enzyme catalyses coproporphyrinogen III + O2 + 2 H(+) = protoporphyrinogen IX + 2 CO2 + 2 H2O. It functions in the pathway porphyrin-containing compound metabolism; protoporphyrin-IX biosynthesis; protoporphyrinogen-IX from coproporphyrinogen-III (O2 route): step 1/1. Involved in the heme biosynthesis. Catalyzes the aerobic oxidative decarboxylation of propionate groups of rings A and B of coproporphyrinogen-III to yield the vinyl groups in protoporphyrinogen-IX. In Bordetella pertussis (strain Tohama I / ATCC BAA-589 / NCTC 13251), this protein is Oxygen-dependent coproporphyrinogen-III oxidase.